The following is a 412-amino-acid chain: Poly-beta-1,6-N-acetyl-D-glucosamine synthase (412 aa).

The next 4 membrane-spanning stretches (helical) occupy residues 7-28 (LLFYPIFMSIYWIVGSIYYFFI), 298-320 (IASITWVYIVICYLSFLVITANI), 332-354 (IFFFSSFTMTFINIIQFTVALFI), and 364-386 (VGLIFLSWYPTLYWVINAAVVIM).

This sequence belongs to the glycosyltransferase 2 family.

The protein localises to the cell membrane. Its function is as follows. N-acetylglucosaminyltransferase that catalyzes the polymerization of single monomer units of UDP-N-acetylglucosamine to produce the linear homomer poly-beta-1,6-N-acetyl-D-glucosamine (PNAG, also referred to as PIA), a biofilm adhesin polysaccharide. Requires IcaD for full activity. In Staphylococcus epidermidis, this protein is Poly-beta-1,6-N-acetyl-D-glucosamine synthase (icaA).